The chain runs to 360 residues: sn-glycerol-3-phosphate import ATP-binding protein UgpC (360 aa).

The ABC transporter domain occupies 4–235; sequence LSLKGVRKSY…PATTFVASFI (232 aa). 37–44 is an ATP binding site; that stretch reads GPSGCGKS.

The protein belongs to the ABC transporter superfamily. sn-glycerol-3-phosphate importer (TC 3.A.1.1.3) family. In terms of assembly, the complex is composed of two ATP-binding proteins (UgpC), two transmembrane proteins (UgpA and UgpE) and a solute-binding protein (UgpB).

The protein localises to the cell inner membrane. The catalysed reaction is sn-glycerol 3-phosphate(out) + ATP + H2O = sn-glycerol 3-phosphate(in) + ADP + phosphate + H(+). Functionally, part of the ABC transporter complex UgpBAEC involved in sn-glycerol-3-phosphate (G3P) import. Responsible for energy coupling to the transport system. The polypeptide is sn-glycerol-3-phosphate import ATP-binding protein UgpC (Burkholderia thailandensis (strain ATCC 700388 / DSM 13276 / CCUG 48851 / CIP 106301 / E264)).